The sequence spans 141 residues: Acetyltransferase YPN_1354 (141 aa).

The N-acetyltransferase domain occupies 1–141; it reads MEIRIFQQDD…GKRLIVDQEY (141 aa).

Belongs to the acetyltransferase family. YpeA subfamily.

The protein is Acetyltransferase YPN_1354 of Yersinia pestis bv. Antiqua (strain Nepal516).